A 195-amino-acid chain; its full sequence is SAGA-associated factor 11 homolog (195 aa).

The disordered stretch occupies residues 1–22 (MSAANMPTTTGAQGSGNQVPRT). The segment at 105–126 (CTCPNCDRLVAAARFAPHLEKC) adopts an SGF11-type zinc-finger fold. The segment at 140 to 195 (RLATKEGATSAHLHSSGNTGGTDDEDDVDWSSDKRRKKSNQNSRNNGSKKNNGKTF) is disordered. The residue at position 171 (Ser-171) is a Phosphoserine. The segment covering 179 to 195 (NQNSRNNGSKKNNGKTF) has biased composition (low complexity).

Belongs to the SGF11 family. Component of some SAGA transcription coactivator-HAT complexes, at least composed of Ada2b, not/nonstop, Pcaf/Gcn5, Sgf11 and Spt3. Within the SAGA complex, Sgf11, e(y)2, and not/nonstop form an additional subcomplex of SAGA called the DUB module (deubiquitination module). Interacts directly with not/nonstop. Interacts with the AMEX complex component xmas-2. Interacts with Cbp80; important for promoter recruitment of Sgf11 that is not associated with the DUB module.

Its subcellular location is the nucleus. It is found in the nucleoplasm. It localises to the cytoplasm. Component of the transcription regulatory histone acetylation (HAT) complex SAGA, a multiprotein complex that activates transcription by remodeling chromatin and mediating histone acetylation and deubiquitination. Within the SAGA complex, participates in a subcomplex that specifically deubiquitinates histone H2B. The SAGA complex is recruited to specific gene promoters by activators, where it is required for transcription. Required for nuclear receptor-mediated transactivation. Binds independently on SAGA to promoters in an RNA-dependent manner. Binds to mRNA and is essential for total mRNA export from the nucleus. Required to counteract heterochromatin silencing. Controls the development of neuronal connectivity in visual system by being required for accurate axon targeting in the optic lobe. Required for expression of ecdysone-induced genes such as br/broad. The sequence is that of SAGA-associated factor 11 homolog from Drosophila sechellia (Fruit fly).